The following is a 328-amino-acid chain: Tetraacyldisaccharide 4'-kinase (328 aa).

ATP is bound at residue Thr-55–Thr-62.

It belongs to the LpxK family.

The enzyme catalyses a lipid A disaccharide + ATP = a lipid IVA + ADP + H(+). It participates in glycolipid biosynthesis; lipid IV(A) biosynthesis; lipid IV(A) from (3R)-3-hydroxytetradecanoyl-[acyl-carrier-protein] and UDP-N-acetyl-alpha-D-glucosamine: step 6/6. In terms of biological role, transfers the gamma-phosphate of ATP to the 4'-position of a tetraacyldisaccharide 1-phosphate intermediate (termed DS-1-P) to form tetraacyldisaccharide 1,4'-bis-phosphate (lipid IVA). In Shigella flexneri serotype 5b (strain 8401), this protein is Tetraacyldisaccharide 4'-kinase.